The primary structure comprises 228 residues: Histidine decarboxylase (228 aa).

His30 provides a ligand contact to substrate. Lys143 carries the post-translational modification N6-(pyridoxal phosphate)lysine.

This sequence belongs to the group II decarboxylase family. Homotetramer. Pyridoxal 5'-phosphate serves as cofactor.

The enzyme catalyses L-histidine + H(+) = histamine + CO2. The chain is Histidine decarboxylase (hdc) from Raoultella ornithinolytica (Klebsiella ornithinolytica).